The chain runs to 218 residues: MGQKINPLGFRLGTTQGHHSLWFSQPKNYSEGLQEDKKIRDCIKNYVQKNMRTSSGIEGIARIEIQKRIDLIQVIIFMGFPKLLIESRPRGIEELQMTLQKEFNCVNRKLNIAVTRIAKPYGNPNILAEFIAGQLKNRVSFRKAMKKAIELTEQADTKGIQIQIAGRIDGKEIARVEWIREGRVPLQTIRAKIDYCSYTVRTIYGILGIKIWIFLDEE.

Residues 47–118 (VQKNMRTSSG…KLNIAVTRIA (72 aa)) enclose the KH type-2 domain.

This sequence belongs to the universal ribosomal protein uS3 family. In terms of assembly, part of the 30S ribosomal subunit.

It localises to the plastid. The protein localises to the chloroplast. The chain is Small ribosomal subunit protein uS3c (rps3) from Solanum bulbocastanum (Wild potato).